Here is a 615-residue protein sequence, read N- to C-terminus: Prickle planar cell polarity protein 3 (615 aa).

Positions 1–12 (MFARGSRRRRSG) are enriched in basic residues. Residues 1–26 (MFARGSRRRRSGRAPPEAEDPDRGQP) form a disordered region. The PET domain occupies 74–182 (SDFQRHSISD…IVRIFPVTIT (109 aa)). 3 LIM zinc-binding domains span residues 184–249 (AICE…CLRP), 250–309 (RCQA…RHAE), and 310–373 (YCDG…SEPT). 2 disordered regions span residues 396–567 (ASFS…LGER) and 587–615 (TFNS…CIVA). Residues 405–415 (SETTTKGTSTE) are compositionally biased toward polar residues. Residues Ser475 and Ser491 each carry the phosphoserine modification. Basic residues predominate over residues 508–531 (PSRRRHHHHNHHHHHNRHPSRRRH). Over residues 537–555 (GSGSDSESCSSSPSSSSSE) the composition is skewed to low complexity. A compositionally biased stretch (basic and acidic residues) spans 606–615 (QARDKNCIVA).

This sequence belongs to the prickle / espinas / testin family. Interacts with VANGL2 via its C-terminus. The VANGL2-dependent membrane recruitment of PRICKLE3 is a prerequisite for its polarization. Interacts with WTIP. WTIP is involved in the recruitment of PRICKLE3 to the basal body. Interacts with MT-ATP8, a component of the mitochondrial complex V. Widely expressed.

It localises to the cytoplasm. The protein localises to the cell membrane. Its subcellular location is the mitochondrion. In terms of biological role, involved in the planar cell polarity (PCP) pathway that is essential for the polarization of epithelial cells during morphogenetic processes, including gastrulation and neurulation. PCP is maintained by two molecular modules, the global and the core modules, PRICKLE3 being part of the core module. Distinct complexes of the core module segregate to opposite sides of the cell, where they interact with the opposite complex in the neighboring cell at or near the adherents junctions. Involved in the organization of the basal body. Involved in cilia growth and positioning. Required for proper assembly, stability, and function of mitochondrial membrane ATP synthase (mitochondrial complex V). This Homo sapiens (Human) protein is Prickle planar cell polarity protein 3.